Here is a 279-residue protein sequence, read N- to C-terminus: 3-methyl-2-oxobutanoate hydroxymethyltransferase (279 aa).

Residues aspartate 44 and aspartate 83 each coordinate Mg(2+). Residues aspartate 44 to serine 45, aspartate 83, and lysine 113 each bind 3-methyl-2-oxobutanoate. Glutamate 115 is a Mg(2+) binding site. Residue glutamate 182 is the Proton acceptor of the active site.

This sequence belongs to the PanB family. In terms of assembly, homodecamer; pentamer of dimers. Mg(2+) serves as cofactor.

Its subcellular location is the cytoplasm. The catalysed reaction is 3-methyl-2-oxobutanoate + (6R)-5,10-methylene-5,6,7,8-tetrahydrofolate + H2O = 2-dehydropantoate + (6S)-5,6,7,8-tetrahydrofolate. It functions in the pathway cofactor biosynthesis; (R)-pantothenate biosynthesis; (R)-pantoate from 3-methyl-2-oxobutanoate: step 1/2. Its function is as follows. Catalyzes the reversible reaction in which hydroxymethyl group from 5,10-methylenetetrahydrofolate is transferred onto alpha-ketoisovalerate to form ketopantoate. This Dehalococcoides mccartyi (strain ATCC BAA-2100 / JCM 16839 / KCTC 5957 / BAV1) protein is 3-methyl-2-oxobutanoate hydroxymethyltransferase.